Reading from the N-terminus, the 397-residue chain is G2/mitotic-specific cyclin-B1 (397 aa).

The protein belongs to the cyclin family. Cyclin AB subfamily. Interacts with the cdc2 protein kinase to form a serine/threonine kinase holoenzyme complex also known as maturation promoting factor (MPF). The cyclin subunit imparts substrate specificity to the complex. When not in a complex with cdc2, interacts with spdya. Interacts with nap1l1. Interacts with nanos1.

The protein resides in the cytoplasm. It localises to the cytoskeleton. The protein localises to the microtubule organizing center. Its subcellular location is the centrosome. It is found in the nucleus. In terms of biological role, essential for the control of the cell cycle at the G2/M (mitosis) transition. This is G2/mitotic-specific cyclin-B1 (ccnb1) from Xenopus laevis (African clawed frog).